Here is a 1194-residue protein sequence, read N- to C-terminus: Multidrug efflux ATP-binding/permease protein Rv0194 (1194 aa).

The next 6 helical transmembrane spans lie at 20-40 (LLLG…VPLV), 56-76 (LAPW…LMYV), 130-150 (LLFD…GVAV), 153-173 (WLSV…GLIA), 258-278 (FALG…FVAF), and 279-299 (WACL…LTIA). Positions 21–301 (LLGFGAALAG…LAGMLTIAQQ (281 aa)) constitute an ABC transmembrane type-1 1 domain. An ABC transporter 1 domain is found at 334–568 (LEFQRVSFGY…CPRYRELLSP (235 aa)). 367-374 (GAPGSGKS) contacts ATP. 6 helical membrane-spanning segments follow: residues 628–648 (ALSL…PLLI), 660–680 (VLSA…IRWV), 743–763 (LVVA…LLAI), 765–785 (ARLV…TWQF), 847–867 (LLAL…TLVL), and 878–898 (VISV…YTPI). The ABC transmembrane type-1 2 domain occupies 628–910 (ALSLLLVAVQ…LAQMFDDYQR (283 aa)). One can recognise an ABC transporter 2 domain in the interval 942–1177 (VVFDAVHYSY…GGHYSRLWAA (236 aa)). 976–983 (GSTGSGKS) provides a ligand contact to ATP.

It belongs to the ABC transporter superfamily. Lipid exporter (TC 3.A.1.106) family.

It localises to the cell inner membrane. With respect to regulation, efflux is inhibited by reserpine. In terms of biological role, overexpression in M.smegmatis increases resistance to erythromycin, ampicillin, novobiocin and vancomycin. It also reduces accumulation of ethidium bromide in the cell. This chain is Multidrug efflux ATP-binding/permease protein Rv0194, found in Mycobacterium tuberculosis (strain ATCC 25618 / H37Rv).